A 143-amino-acid chain; its full sequence is Hemoglobin subunit alpha-2 (143 aa).

The residue at position 2 (Ser-2) is an N-acetylserine. In terms of domain architecture, Globin spans 2–143 (SLSSKQKATV…LALALAEKYR (142 aa)). His-60 is a binding site for O2. Heme b is bound at residue His-89.

The protein belongs to the globin family. Hb 2 is a heterotetramer of two alpha-2 and two beta-2 chains. Red blood cells.

Functionally, involved in oxygen transport from gills to the various peripheral tissues. This is Hemoglobin subunit alpha-2 (hba2) from Gadus morhua (Atlantic cod).